We begin with the raw amino-acid sequence, 338 residues long: DNA fragmentation factor subunit beta (338 aa).

Residues 4–80 (KPKSVKLRAL…LLTLGQAWQG (77 aa)) form the CIDE-N domain.

As to quaternary structure, heterodimer of DFFA and DFFB. Interacts with H1-1.

The protein localises to the cytoplasm. It localises to the nucleus. Inhibited by DFFA (DFF45). Nuclease that induces DNA fragmentation and chromatin condensation during apoptosis. Degrades naked DNA and induces apoptotic morphology. This is DNA fragmentation factor subunit beta (DFFB) from Homo sapiens (Human).